We begin with the raw amino-acid sequence, 100 residues long: Virion membrane protein OPG135 (100 aa).

The signal sequence occupies residues 1–22; it reads MSCYTAILKSVGGLALFQVANG. Topologically, residues 23–45 are intravirion; that stretch reads AIDLCRHFFMYFCEQKLRPNSFW. A helical transmembrane segment spans residues 46 to 66; sequence FVVVRAIASMIMYLVLGIALL. Residues 67–83 are Virion surface-facing; it reads YISEQDDKKNTNNDSNS. The interval 75 to 100 is disordered; the sequence is KNTNNDSNSNNDKRNVSSINSNSSHK. Residues Asn79, Asn89, and Asn96 are each glycosylated (N-linked (GlcNAc...) asparagine; by host).

The protein belongs to the chordopoxvirinae A9 family.

The protein resides in the virion membrane. Its subcellular location is the host cytoplasm. Its function is as follows. Envelope protein. Required for an early step in virion morphogenesis. The sequence is that of Virion membrane protein OPG135 (OPG135) from Monkeypox virus.